Here is a 240-residue protein sequence, read N- to C-terminus: Lysoplasmalogenase TMEM86A (240 aa).

At 1-21 the chain is on the cytoplasmic side; sequence MVSPVTVVKSEGPKLVPFFKA. The helical transmembrane segment at 22–42 threads the bilayer; the sequence is TCVYFVLWLPSSSPSWVSALI. Position 43 (K43) is a topological domain, extracellular. Residues 44–64 traverse the membrane as a helical segment; that stretch reads CLPIFCLWLFLLAHGLGFLLT. Residues 65-70 lie on the Cytoplasmic side of the membrane; sequence HPSATR. Residues 71-91 form a helical membrane-spanning segment; sequence IFVGLVFSAIGDAFLIWQDQG. Residue Y92 is a topological domain, extracellular. Residues 93-113 traverse the membrane as a helical segment; that stretch reads FVHGMLMFAVTHMLYASAFGM. Topologically, residues 114–115 are cytoplasmic; that stretch reads RP. Residues 116-136 form a helical membrane-spanning segment; sequence LGLRTGLLMVILSGLCYAFLY. The Extracellular segment spans residues 137–138; it reads PN. A helical membrane pass occupies residues 139-159; the sequence is LTGAFTYVVGVYVAIIGFMGW. Residues 160–174 lie on the Cytoplasmic side of the membrane; it reads RAMAGLQLVGAAWRW. Residues 175–195 form a helical membrane-spanning segment; it reads TELAAGTGALLFIVSDLTIAL. At 196–206 the chain is on the extracellular side; the sequence is DKFCFPVPYSR. The helical transmembrane segment at 207-227 threads the bilayer; it reads ALIMSTYYAAQMLIALSAVES. At 228 to 240 the chain is on the cytoplasmic side; that stretch reads REPVEDYRLSKAK.

The protein belongs to the TMEM86 family.

It localises to the endoplasmic reticulum membrane. It carries out the reaction a 1-O-(1Z-alkenyl)-sn-glycero-3-phosphocholine + H2O = a 2,3-saturated aldehyde + sn-glycerol 3-phosphocholine. The enzyme catalyses a 1-O-(1Z-alkenyl)-sn-glycero-3-phosphoethanolamine + H2O = a 2,3-saturated aldehyde + sn-glycero-3-phosphoethanolamine. Catalyzes the hydrolysis of the vinyl ether bond of choline or ethanolamine lysoplasmalogens, forming fatty aldehyde and glycerophosphocholine or glycerophosphoethanolamine, respectively and is specific for the sn-2-deacylated (lyso) form of plasmalogen. Plays an important role in lysoplasmalogen metabolism in the adipocyte tissue and macrophages. The polypeptide is Lysoplasmalogenase TMEM86A (TMEM86A) (Bos taurus (Bovine)).